The following is a 348-amino-acid chain: Anthranilate phosphoribosyltransferase (348 aa).

5-phospho-alpha-D-ribose 1-diphosphate-binding positions include Gly81, 84-85 (GD), 91-94 (NVST), 109-117 (KHGNRAVSG), and Ser121. Residue Gly81 participates in anthranilate binding. Residue Ser93 participates in Mg(2+) binding. Asn112 contacts anthranilate. Arg167 is an anthranilate binding site. Asp226 and Glu227 together coordinate Mg(2+).

The protein belongs to the anthranilate phosphoribosyltransferase family. Homodimer. It depends on Mg(2+) as a cofactor.

The catalysed reaction is N-(5-phospho-beta-D-ribosyl)anthranilate + diphosphate = 5-phospho-alpha-D-ribose 1-diphosphate + anthranilate. It participates in amino-acid biosynthesis; L-tryptophan biosynthesis; L-tryptophan from chorismate: step 2/5. Its function is as follows. Catalyzes the transfer of the phosphoribosyl group of 5-phosphorylribose-1-pyrophosphate (PRPP) to anthranilate to yield N-(5'-phosphoribosyl)-anthranilate (PRA). This chain is Anthranilate phosphoribosyltransferase, found in Azotobacter vinelandii (strain DJ / ATCC BAA-1303).